The sequence spans 484 residues: T-complex protein 1 subunit delta (484 aa).

It belongs to the TCP-1 chaperonin family. Component of the T-complex protein 1 (TCP1) complex.

The protein resides in the cytoplasm. Molecular chaperone; assists the folding of proteins upon ATP hydrolysis. The sequence is that of T-complex protein 1 subunit delta (CCT4) from Encephalitozoon cuniculi (strain GB-M1) (Microsporidian parasite).